The following is a 276-amino-acid chain: NH(3)-dependent NAD(+) synthetase (276 aa).

Gly-43–Ser-50 serves as a coordination point for ATP. Position 49 (Asp-49) interacts with Mg(2+). Deamido-NAD(+) is bound at residue Arg-146. Thr-166 serves as a coordination point for ATP. Glu-171 provides a ligand contact to Mg(2+). Deamido-NAD(+) is bound by residues Lys-179 and Asp-186. 2 residues coordinate ATP: Lys-195 and Thr-217. His-266 to Lys-267 serves as a coordination point for deamido-NAD(+).

Belongs to the NAD synthetase family. As to quaternary structure, homodimer.

The catalysed reaction is deamido-NAD(+) + NH4(+) + ATP = AMP + diphosphate + NAD(+) + H(+). It participates in cofactor biosynthesis; NAD(+) biosynthesis; NAD(+) from deamido-NAD(+) (ammonia route): step 1/1. Its function is as follows. Catalyzes the ATP-dependent amidation of deamido-NAD to form NAD. Uses ammonia as a nitrogen source. This is NH(3)-dependent NAD(+) synthetase from Vibrio atlanticus (strain LGP32) (Vibrio splendidus (strain Mel32)).